The following is a 258-amino-acid chain: Thiamine thiazole synthase (258 aa).

NAD(+) is bound by residues Ala-36, 55-56, Gly-63, Val-127, and 154-156; these read EK and HVD. Residues Asp-156 and His-171 each contribute to the Fe cation site. Residue Met-224 coordinates NAD(+). Arg-234 is a glycine binding site.

This sequence belongs to the THI4 family. In terms of assembly, homooctamer; tetramer of dimers. Requires Fe(2+) as cofactor.

The enzyme catalyses hydrogen sulfide + glycine + NAD(+) = ADP-5-ethyl-4-methylthiazole-2-carboxylate + nicotinamide + 3 H2O + H(+). It functions in the pathway cofactor biosynthesis; thiamine diphosphate biosynthesis. Involved in the biosynthesis of the thiazole moiety of thiamine. Catalyzes the conversion of NAD and glycine to adenosine diphosphate 5-(2-hydroxyethyl)-4-methylthiazole-2-carboxylate (ADT), an adenylated thiazole intermediate, using free sulfide as a source of sulfur. The polypeptide is Thiamine thiazole synthase (Methanococcoides burtonii (strain DSM 6242 / NBRC 107633 / OCM 468 / ACE-M)).